The chain runs to 343 residues: Type II restriction enzyme BsuMI component YdiS (343 aa).

BsuMI restriction activity requires YdiR, YdiS and YdjA.

The enzyme catalyses Endonucleolytic cleavage of DNA to give specific double-stranded fragments with terminal 5'-phosphates.. Functionally, a P subtype restriction enzyme that recognizes the double-stranded sequence 5'-CTCGAG-3'; the cleavage site is unknown. In Bacillus subtilis (strain 168), this protein is Type II restriction enzyme BsuMI component YdiS (ydiS).